Reading from the N-terminus, the 303-residue chain is Taste receptor type 2 member 2 (303 aa).

The Extracellular portion of the chain corresponds to 1 to 10 (MALSFSAILH). The helical transmembrane segment at 11–31 (IIMMSAEFFTGITVNGFLIIV) threads the bilayer. Residues 32-56 (NCNELIKHRKLMPIQILLMCIGMSR) are Cytoplasmic-facing. Residues 57-77 (FGLQMVLMVQSFFSVFFPLLY) form a helical membrane-spanning segment. Residues 78–79 (VK) are Extracellular-facing. The chain crosses the membrane as a helical span at residues 80-100 (IIYGAAMMFLWMFFSSISLWF). At 101-102 (AT) the chain is on the cytoplasmic side. Residues 103-123 (CLSVFYCLKISGFTQSCFLWL) form a helical membrane-spanning segment. Over 124–129 (KFRIPK) the chain is Extracellular. Residues 130–150 (LIPWLLLGSVLASVSIASVCI) form a helical membrane-spanning segment. At 151 to 185 (EVDYAKNVEEDALRNTTLKKSKTKIKKISEVLLVN) the chain is on the cytoplasmic side. The chain crosses the membrane as a helical span at residues 186–206 (LALIFPLAIFVMCTSMLLISL). At 207 to 234 (YKHTHRMQHGSHGFRNANTEAHINALKT) the chain is on the extracellular side. Residues 235–255 (VITFFCFFISYFAAFMTNMTF) traverse the membrane as a helical segment. The Cytoplasmic segment spans residues 256-277 (SLPYRSHQFFMLKDIMAAYPSG).

The protein belongs to the G-protein coupled receptor T2R family.

It localises to the cell membrane. Bitter taste receptor that detects natural and synthetic bitter compounds. The protein is Taste receptor type 2 member 2 of Homo sapiens (Human).